The sequence spans 204 residues: uncharacterized protein (204 aa).

In terms of tissue distribution, component of the acid-soluble organic matrix of the aragonitic skeleton (at protein level).

It is found in the secreted. This is an uncharacterized protein from Acropora millepora (Staghorn coral).